The sequence spans 358 residues: Probable protein phosphatase 2C 68 (358 aa).

Positions 74–352 constitute a PPM-type phosphatase domain; that stretch reads RHGAASVAGR…DNISVVVVDL (279 aa). Mn(2+)-binding residues include aspartate 117, glycine 118, aspartate 298, and aspartate 343.

Belongs to the PP2C family. Requires Mg(2+) as cofactor. The cofactor is Mn(2+).

The protein resides in the nucleus. It localises to the cytoplasm. It is found in the cytosol. The enzyme catalyses O-phospho-L-seryl-[protein] + H2O = L-seryl-[protein] + phosphate. It catalyses the reaction O-phospho-L-threonyl-[protein] + H2O = L-threonyl-[protein] + phosphate. In terms of biological role, involved in the regulation of abiotic stress responses. Acts as a negative regulator of abscisic acid (ABA) signaling and positive regulator of abiotic stress signaling. May be involved in panicle development. The chain is Probable protein phosphatase 2C 68 from Oryza sativa subsp. japonica (Rice).